A 115-amino-acid chain; its full sequence is Chondroitin proteoglycan 8 (115 aa).

The first 16 residues, 1–16 (MRPFILLALLVSVTVA), serve as a signal peptide directing secretion. Residues 33–96 (VRRTTRDASD…GSGAAEVTSV (64 aa)) are disordered. O-linked (Xyl...) (chondroitin sulfate) serine glycosylation is found at S61, S63, S84, S88, and S109.

The chain is Chondroitin proteoglycan 8 from Caenorhabditis elegans.